A 41-amino-acid chain; its full sequence is Divisome-associated membrane protein Blr (41 aa).

Over 1 to 3 (MNR) the chain is Cytoplasmic. A helical membrane pass occupies residues 4–24 (LIELTGWIVLVVSVILLGVAS). Residues 25–41 (HIDNYQPPEQSASVQHK) are Periplasmic-facing.

In terms of assembly, interacts with FtsL and several other divisomal proteins, including FtsI, FtsK, FtsN, FtsQ, FtsW and YmgF. In terms of processing, the N-terminus is blocked.

The protein localises to the cell inner membrane. In terms of biological role, component of the cell division machinery, which is probably involved in the stabilization of the divisome under certain stress conditions. This chain is Divisome-associated membrane protein Blr (blr), found in Escherichia coli (strain K12).